The sequence spans 3054 residues: Genome polyprotein (3054 aa).

The Peptidase S30 domain occupies 163–304 (FLPATSLSNV…FAVCHSMTHY (142 aa)). Residues H214, D223, and S256 each act as for P1 proteinase activity in the active site. The Involved in interaction with stylet and aphid transmission motif lies at 358–361 (KITC). The Involved in virions binding and aphid transmission motif lies at 615 to 617 (PTK). The Peptidase C6 domain maps to 641-763 (MYIANEGYCY…ESEMKTYNVG (123 aa)). Active-site for helper component proteinase activity residues include C649 and H722. A Helicase ATP-binding domain is found at 1234-1386 (EISHSPARDF…TQFPVKLKIE (153 aa)). 1247–1254 (GAVGSGKS) contacts ATP. The short motif at 1336-1339 (DECH) is the DECH box element. Residues 1401-1564 (GANADVISCG…NLPVTTQSVS (164 aa)) enclose the Helicase C-terminal domain. A Nuclear localization signal motif is present at residues 1889 to 1896 (NKGKRKGT). Y1911 is subject to O-(5'-phospho-RNA)-tyrosine. One can recognise a Peptidase C4 domain in the interval 2038–2255 (GESLFKGPRD…VLWGGHKVFM (218 aa)). Residues H2083, D2118, and C2188 each act as for nuclear inclusion protein A activity in the active site. The RdRp catalytic domain occupies 2521 to 2641 (WVYCDADGSQ…AIHPDKAERL (121 aa)). Positions 2798–2827 (GADAGKKKDQKDDKVAEQASKDRDVNAGTS) are disordered. Positions 2801 to 2822 (AGKKKDQKDDKVAEQASKDRDV) are enriched in basic and acidic residues. T3038 bears the Phosphothreonine mark.

This sequence belongs to the potyviridae genome polyprotein family. Interacts with host eIF4E protein (via cap-binding region); this interaction mediates the translation of the VPg-viral RNA conjugates. Part of a complex that comprises VPg, RNA, host EIF4E and EIF4G; this interaction mediates the translation of the VPg-viral RNA conjugates. Interaction is possible in susceptible hosts but impaired in resistant plants: the VPg of strain HAT interacts with tomato eIF4E1 and eIF4E2 as well as with Capsicum annuum eIF4E1 susceptible alleles pvr2(+), pvr2(3) and pvr2(9) but not with the resistant allele pvr2(2), the VPg of strain CAA10 interacts with C.annuum eIF4E1 susceptible alleles pvr2(+), pvr2(2), pvr2(3) and pvr2(9), the VPg of strain NW interacts at least with C.annuum eIF4E1. As to quaternary structure, homodimer; disulfide-linked. In terms of processing, VPg is uridylylated by the polymerase and is covalently attached to the 5'-end of the genomic RNA. This uridylylated form acts as a nucleotide-peptide primer for the polymerase. Post-translationally, potyviral RNA is expressed as two polyproteins which undergo post-translational proteolytic processing. Genome polyprotein is processed by NIa-pro, P1 and HC-pro proteinases resulting in the production of at least ten individual proteins. P3N-PIPO polyprotein is cleaved by P1 and HC-pro proteinases resulting in the production of three individual proteins. The P1 proteinase and the HC-pro cleave only their respective C-termini autocatalytically. 6K1 is essential for proper proteolytic separation of P3 from CI.

The protein localises to the host cytoplasmic vesicle. The protein resides in the host nucleus. It localises to the virion. The catalysed reaction is RNA(n) + a ribonucleoside 5'-triphosphate = RNA(n+1) + diphosphate. It catalyses the reaction Hydrolyzes glutaminyl bonds, and activity is further restricted by preferences for the amino acids in P6 - P1' that vary with the species of potyvirus, e.g. Glu-Xaa-Xaa-Tyr-Xaa-Gln-|-(Ser or Gly) for the enzyme from tobacco etch virus. The natural substrate is the viral polyprotein, but other proteins and oligopeptides containing the appropriate consensus sequence are also cleaved.. It carries out the reaction Hydrolyzes a Gly-|-Gly bond at its own C-terminus, commonly in the sequence -Tyr-Xaa-Val-Gly-|-Gly, in the processing of the potyviral polyprotein.. Functionally, required for aphid transmission and also has proteolytic activity. Only cleaves a Gly-Gly dipeptide at its own C-terminus. Interacts with virions and aphid stylets. Acts as a suppressor of RNA-mediated gene silencing, also known as post-transcriptional gene silencing (PTGS), a mechanism of plant viral defense that limits the accumulation of viral RNAs. May have RNA-binding activity. Its function is as follows. Has helicase activity. It may be involved in replication. In terms of biological role, indispensable for virus replication. Reduces the abundance of host transcripts related to jasmonic acid biosynthesis therefore altering the host defenses. In order to increase its own stability, decreases host protein degradation pathways. Indispensable for virus replication. Functionally, mediates the cap-independent, EIF4E-dependent translation of viral genomic RNAs. Binds to the cap-binding site of host EIF4E and thus interferes with the host EIF4E-dependent mRNA export and translation. VPg-RNA directly binds EIF4E and is a template for transcription. Also forms trimeric complexes with EIF4E-EIF4G, which are templates for translation. Its function is as follows. Has RNA-binding and proteolytic activities. In terms of biological role, an RNA-dependent RNA polymerase that plays an essential role in the virus replication. Involved in aphid transmission, cell-to-cell and systemis movement, encapsidation of the viral RNA and in the regulation of viral RNA amplification. This chain is Genome polyprotein, found in Capsicum annuum (Capsicum pepper).